The sequence spans 211 residues: FMN-dependent NADH:quinone oxidoreductase (211 aa).

FMN contacts are provided by residues 17–19, 102–105, and 146–149; these read SNS, MWNL, and SRGG.

This sequence belongs to the azoreductase type 1 family. In terms of assembly, homodimer. FMN serves as cofactor.

The catalysed reaction is 2 a quinone + NADH + H(+) = 2 a 1,4-benzosemiquinone + NAD(+). It carries out the reaction N,N-dimethyl-1,4-phenylenediamine + anthranilate + 2 NAD(+) = 2-(4-dimethylaminophenyl)diazenylbenzoate + 2 NADH + 2 H(+). Functionally, quinone reductase that provides resistance to thiol-specific stress caused by electrophilic quinones. Its function is as follows. Also exhibits azoreductase activity. Catalyzes the reductive cleavage of the azo bond in aromatic azo compounds to the corresponding amines. The chain is FMN-dependent NADH:quinone oxidoreductase from Macrococcus caseolyticus (strain JCSC5402) (Macrococcoides caseolyticum).